The chain runs to 545 residues: Esterase-5C (545 aa).

Positions 1–19 are cleaved as a signal peptide; the sequence is MLAARLIILLSFYWLSASA. Cysteine 84 and cysteine 103 form a disulfide bridge. An N-linked (GlcNAc...) asparagine glycan is attached at asparagine 113. The active-site Acyl-ester intermediate is the serine 207. The cysteines at positions 259 and 271 are disulfide-linked. Asparagine 421 carries an N-linked (GlcNAc...) asparagine glycan. The active-site Charge relay system is the histidine 467. An N-linked (GlcNAc...) asparagine glycan is attached at asparagine 507. A disulfide bridge connects residues cysteine 515 and cysteine 536.

It belongs to the type-B carboxylesterase/lipase family.

It is found in the secreted. It carries out the reaction a carboxylic ester + H2O = an alcohol + a carboxylate + H(+). The polypeptide is Esterase-5C (Est-5C) (Drosophila persimilis (Fruit fly)).